Reading from the N-terminus, the 368-residue chain is Glutamate 5-kinase (368 aa).

Residue Lys12 coordinates ATP. 3 residues coordinate substrate: Ser52, Asp139, and Asn151. Residues 171 to 172 and 213 to 219 each bind ATP; these read SD and TGGMKTK. A PUA domain is found at 277 to 354; sequence KGALIIDDGA…KEIEKLLGYI (78 aa).

It belongs to the glutamate 5-kinase family.

It localises to the cytoplasm. It carries out the reaction L-glutamate + ATP = L-glutamyl 5-phosphate + ADP. Its pathway is amino-acid biosynthesis; L-proline biosynthesis; L-glutamate 5-semialdehyde from L-glutamate: step 1/2. Its function is as follows. Catalyzes the transfer of a phosphate group to glutamate to form L-glutamate 5-phosphate. This chain is Glutamate 5-kinase, found in Pelagibacter ubique (strain HTCC1062).